We begin with the raw amino-acid sequence, 67 residues long: Light-harvesting protein B-870 alpha chain (67 aa).

The Cytoplasmic segment spans residues 1–12 (MWRIWRLFDPMR). A helical transmembrane segment spans residues 13-33 (AMVAQAVFLLGLAVLIHLMLL). H29 is an a bacteriochlorophyll binding site. Topologically, residues 34–67 (GTNKYNWLDGAKKAPVATAVAPVPAEVTSLAQAK) are periplasmic.

The protein belongs to the antenna complex alpha subunit family. In terms of assembly, an alpha/beta heterodimer. The core complex is formed by different alpha and beta chains, binding bacteriochlorophyll molecules, and arranged most probably in tetrameric structures disposed around the reaction center. The non-pigmented gamma chains may constitute additional components.

The protein localises to the cell inner membrane. Its function is as follows. Antenna complexes are light-harvesting systems, which transfer the excitation energy to the reaction centers. This Rubrivivax gelatinosus (strain NBRC 100245 / IL144) protein is Light-harvesting protein B-870 alpha chain (pufA).